The primary structure comprises 113 residues: Large ribosomal subunit protein uL22 (113 aa).

The protein belongs to the universal ribosomal protein uL22 family. Part of the 50S ribosomal subunit.

Its function is as follows. This protein binds specifically to 23S rRNA; its binding is stimulated by other ribosomal proteins, e.g. L4, L17, and L20. It is important during the early stages of 50S assembly. It makes multiple contacts with different domains of the 23S rRNA in the assembled 50S subunit and ribosome. The globular domain of the protein is located near the polypeptide exit tunnel on the outside of the subunit, while an extended beta-hairpin is found that lines the wall of the exit tunnel in the center of the 70S ribosome. This Roseiflexus sp. (strain RS-1) protein is Large ribosomal subunit protein uL22.